Reading from the N-terminus, the 70-residue chain is Conotoxin ArMKLT2-0111 (70 aa).

The N-terminal stretch at 1 to 22 (MKLTCVLIIAVLFLTACQLTTG) is a signal peptide. Positions 23–40 (EQKDHALRSTDKNSKLTR) are excised as a propeptide. Gln41 is subject to Pyrrolidone carboxylic acid. Intrachain disulfides connect Cys42–Cys56, Cys49–Cys60, and Cys55–Cys67.

The protein belongs to the conotoxin O1 superfamily. As to expression, expressed by the venom duct.

The protein localises to the secreted. The chain is Conotoxin ArMKLT2-0111 from Conus arenatus (Sand-dusted cone).